We begin with the raw amino-acid sequence, 366 residues long: N-acetyl-6-hydroxytryptophan oxidase ivoB (366 aa).

The signal sequence occupies residues Met-1 to Phe-18. N-linked (GlcNAc...) asparagine glycosylation is found at Asn-28 and Asn-81. 2 residues coordinate Cu cation: His-87 and His-96. Asn-114 and Asn-121 each carry an N-linked (GlcNAc...) asparagine glycan. His-291 is a Cu cation binding site. Asn-319 is a glycosylation site (N-linked (GlcNAc...) asparagine).

It belongs to the tyrosinase family. Cu(2+) is required as a cofactor.

Its pathway is pigment biosynthesis. With respect to regulation, activity is inhibited by 2,3-dihydroxynaphthalene, phenylhydrazine, diethyl dithiocarbamate and 8-hydroxyquinolene. Nonribosomal peptide synthetase; part of the pathway that mediates the biosynthesis of the gray-brown conidiophore pigment. The first step of the pathway is performed by the nonribosomal peptide synthetase ivoA that catalyzes ATP-dependent unidirectional stereoinversion of L-tryptophan to D-tryptophan with complete conversion. While the stereoinversion is catalyzed by the epimerization (E) domain of ivoA, the terminal condensation (C) domain stereoselectively hydrolyzes D-tryptophanyl-S-phosphopantetheine thioester and thus represents a non-canonical C domain function. D-tryptophan is acetylated, probably by an endogenous acetyltransferase. N-acetyltryptophan is further 6-hydroxylated into N-acetyl-6-hydroxytryptophan (AHT) by the cytochrome P450 monooxygenase ivoC. N-acetyl-6-hydroxytryptophan is substrate of the N-acetyl-6-hydroxytryptophan oxidase ivoB to produce the gray-brown conidiophore pigment. This chain is N-acetyl-6-hydroxytryptophan oxidase ivoB, found in Emericella nidulans (strain FGSC A4 / ATCC 38163 / CBS 112.46 / NRRL 194 / M139) (Aspergillus nidulans).